A 40-amino-acid chain; its full sequence is Photosystem II reaction center protein J (40 aa).

A helical transmembrane segment spans residues 8-28 (IPLWIIGTVAGIVVIGLIGLF).

The protein belongs to the PsbJ family. In terms of assembly, PSII is composed of 1 copy each of membrane proteins PsbA, PsbB, PsbC, PsbD, PsbE, PsbF, PsbH, PsbI, PsbJ, PsbK, PsbL, PsbM, PsbT, PsbX, PsbY, PsbZ, Psb30/Ycf12, at least 3 peripheral proteins of the oxygen-evolving complex and a large number of cofactors. It forms dimeric complexes.

Its subcellular location is the plastid. The protein localises to the chloroplast thylakoid membrane. Its function is as follows. One of the components of the core complex of photosystem II (PSII). PSII is a light-driven water:plastoquinone oxidoreductase that uses light energy to abstract electrons from H(2)O, generating O(2) and a proton gradient subsequently used for ATP formation. It consists of a core antenna complex that captures photons, and an electron transfer chain that converts photonic excitation into a charge separation. The chain is Photosystem II reaction center protein J from Pisum sativum (Garden pea).